The primary structure comprises 186 residues: Nuclear transcription factor Y subunit C-5 (186 aa).

The tract at residues 166–186 (QMPGAWTEEDATGANGGNGGN) is disordered.

The protein belongs to the NFYC/HAP5 subunit family. In terms of assembly, heterotrimeric transcription factor composed of three components, NF-YA, NF-YB and NF-YC. NF-YB and NF-YC must interact and dimerize for NF-YA association and DNA binding. Expressed in inflorescences and flowers.

The protein resides in the nucleus. Its function is as follows. Stimulates the transcription of various genes by recognizing and binding to a CCAAT motif in promoters. This is Nuclear transcription factor Y subunit C-5 (NFYC5) from Arabidopsis thaliana (Mouse-ear cress).